Reading from the N-terminus, the 471-residue chain is Argininosuccinate lyase (471 aa).

This sequence belongs to the lyase 1 family. Argininosuccinate lyase subfamily.

Its subcellular location is the cytoplasm. It catalyses the reaction 2-(N(omega)-L-arginino)succinate = fumarate + L-arginine. Its pathway is amino-acid biosynthesis; L-arginine biosynthesis; L-arginine from L-ornithine and carbamoyl phosphate: step 3/3. The chain is Argininosuccinate lyase from Cereibacter sphaeroides (strain ATCC 17025 / ATH 2.4.3) (Rhodobacter sphaeroides).